We begin with the raw amino-acid sequence, 438 residues long: Putative permease HI_0125 (438 aa).

Transmembrane regions (helical) follow at residues 21 to 41 (IIAGLTTFLAMVYSVIVVPNM), 51 to 71 (SVFIATCLVAGLGSILIGLWA), 73 to 93 (APMAIGCAISLTAFTAFSLVI), 97 to 117 (VAIPVALGAVFLMGVVFTLIS), 137 to 157 (AGIGIGLFLLLIAANGVGLVV), 167 to 187 (LGDFTSFPVMMSLIGLALIIG), 195 to 215 (GGILWVIIAITIVGLIFDPNV), 238 to 258 (FMGALQPAILPVVFALVMTAV), 296 to 316 (LFSGLFGTAPAAVYIESAAGT), 326 to 346 (AIVVGVLFLLMLFFQPLAFLV), 347 to 367 (PGYATAPALMYVGLLMLSNVS), 386 to 406 (FIVLTANIVTGIMLGFAALVI), and 418 to 438 (NVGTVIIAIVLVAFYAGGWAI). ATP is bound at residue 315–322 (GTAAGGKT).

The protein belongs to the nucleobase:cation symporter-2 (NCS2) (TC 2.A.40) family. Azg-like subfamily.

Its subcellular location is the cell membrane. This is Putative permease HI_0125 from Haemophilus influenzae (strain ATCC 51907 / DSM 11121 / KW20 / Rd).